Here is a 495-residue protein sequence, read N- to C-terminus: Leucine aminopeptidase 2 (495 aa).

Residues 1-21 (MKSQLLSLAVAVSTISQGVVG) form the signal peptide. A PA domain is found at 124–218 (PPANKIMAEL…EDGKNLASLV (95 aa)). Residues asparagine 142 and asparagine 235 are each glycosylated (N-linked (GlcNAc...) asparagine). Zn(2+) is bound by residues histidine 259 and aspartate 271. N-linked (GlcNAc...) asparagine glycosylation occurs at asparagine 272. The active-site Proton acceptor is the glutamate 303. Zn(2+) contacts are provided by glutamate 304 and aspartate 332. An N-linked (GlcNAc...) asparagine glycan is attached at asparagine 352. Position 430 (histidine 430) interacts with Zn(2+).

It belongs to the peptidase M28 family. M28A subfamily. In terms of assembly, monomer. Zn(2+) is required as a cofactor.

Its subcellular location is the secreted. Functionally, extracellular aminopeptidase that releases a wide variety of amino acids from natural peptides and contributes to pathogenicity. The sequence is that of Leucine aminopeptidase 2 (LAP2) from Trichophyton equinum (Horse ringworm fungus).